Here is a 799-residue protein sequence, read N- to C-terminus: Oligopeptide transporter 1 (799 aa).

2 disordered regions span residues 1 to 26 (MSTI…PIQI) and 43 to 64 (DVNN…QKFD). Residues 1–108 (MSTIYRESDS…DPTIRLNHWR (108 aa)) are Extracellular-facing. A compositionally biased stretch (low complexity) spans 13 to 26 (SEPSPTPTTIPIQI). Asn-46 carries an N-linked (GlcNAc...) asparagine glycan. 3 positions are modified to phosphothreonine: Thr-48, Thr-50, and Thr-51. A helical membrane pass occupies residues 109-129 (TWFLTTVFVVVFAGVNQFFSL). At 130-135 (RYPSLE) the chain is on the cytoplasmic side. Residues 136–156 (INFLVAQVVCYPIGRILALLP) form a helical membrane-spanning segment. Residues 157–177 (DWKCSKVPFFDLNPGPFTKKE) lie on the Extracellular side of the membrane. Residues 178–198 (HAVVTIAVALTSSTAYAMYIL) traverse the membrane as a helical segment. Over 199 to 210 (NAQGSFYNMKLN) the chain is Cytoplasmic. Residues 211 to 231 (VGYQFLLVWTSQMIGYGAAGL) form a helical membrane-spanning segment. Residues 232–276 (TRRWVVNPASSIWPQTLISVSLFDSLHSRKVEKTVANGWTMPRYR) lie on the Extracellular side of the membrane. A helical transmembrane segment spans residues 277–297 (FFLIVLIGSFIWYWVPGFLFT). Over 298–313 (GLSYFNVILWGSKTRH) the chain is Cytoplasmic. The helical transmembrane segment at 314–334 (NFIANTIFGTQSGLGALPITF) threads the bilayer. The Extracellular portion of the chain corresponds to 335 to 359 (DYTQVSQAMSGSVFATPFYVSANTY). A helical transmembrane segment spans residues 360-380 (ASVLIFFVIVLPCLYFTNTWY). Residues 381–428 (AKYMPVISGSTYDNTQNKYNVTKILNEDYSINLEKYKEYSPVFVPFSY) lie on the Cytoplasmic side of the membrane. Residues 429–449 (LLSYALNFAAVIAVFVHCILY) traverse the membrane as a helical segment. Topologically, residues 450–482 (HGKDIVAKFKDRKNGGTDIHMRIYSKNYKDCPD) are extracellular. The chain crosses the membrane as a helical span at residues 483-503 (WWYLLLQIVMIGLGFVAVCCF). The Cytoplasmic segment spans residues 504–508 (DTKFP). The chain crosses the membrane as a helical span at residues 509-529 (AWAFVIAILISLVNFIPQGIL). Topologically, residues 530-540 (EAMTNQHVGLN) are extracellular. Residues 541 to 561 (IITELICGYMLPLRPMANLLF) form a helical membrane-spanning segment. Topologically, residues 562–590 (KLYGFIVMRQGLNLSRDLKLAMYMKVSPR) are cytoplasmic. A helical membrane pass occupies residues 591–611 (LIFAVQIYATIISGMVNVGVQ). Over 612–659 (EWMMHNIDGLCTTDQPNGFTCANGRTVFNASIIWSLPKYLFSSGRIYN) the chain is Extracellular. A glycan (N-linked (GlcNAc...) asparagine) is linked at Asn-640. Residues 660 to 680 (PLMWFFLIGLLFPLAVYAVQW) form a helical membrane-spanning segment. The Cytoplasmic segment spans residues 681–736 (KFPKFKFAKHIHTPVFFTGPGNIPPSTPYNYSLFFAMSFCLNLIRKRWRAWFNKYN). Residues 737-757 (FVMGAGVEAGVAISVVIIFLC) traverse the membrane as a helical segment. The Extracellular segment spans residues 758–799 (VQYPGGKLSWWGNNVWKRTYDNDYKKFYTLKKGETFGYDKWW).

It belongs to the oligopeptide OPT transporter family.

Its subcellular location is the cell membrane. High affinity transporter for glutathione. Also transports tetra- and pentapeptides like the opioids leucine enkephalin (Tyr-Gly-Gly-Phe-Leu) and methionine enkephalin (Tyr-Gly-Gly_Phe-Met) across the cell membrane. This is Oligopeptide transporter 1 (OPT1) from Saccharomyces cerevisiae (strain ATCC 204508 / S288c) (Baker's yeast).